A 465-amino-acid polypeptide reads, in one-letter code: ATP-dependent rRNA helicase rrp3 (465 aa).

Residues 1–46 (MSALKKRKITEKQPETNSDSEAESVSSRGSAKDETQTSGEEPAPAK) are disordered. Positions 15–29 (ETNSDSEAESVSSRG) are enriched in polar residues. Residues 46–74 (KSFKELGIIDQLCEACENMGYKAPTPIQS) carry the Q motif motif. One can recognise a Helicase ATP-binding domain in the interval 77 to 248 (IPLALEGRDV…RASLSNPVRV (172 aa)). 90-97 (AETGSGKT) provides a ligand contact to ATP. The DEAD box motif lies at 196–199 (DEAD). The Helicase C-terminal domain occupies 275–419 (YLVYLLNEFA…EYQVEKDEVM (145 aa)). The disordered stretch occupies residues 436 to 465 (MKSFDEKKGARGKKFGKGKRSRDDMDQEEG). Residues 445 to 455 (ARGKKFGKGKR) are compositionally biased toward basic residues.

Belongs to the DEAD box helicase family. DDX47/RRP3 subfamily. As to quaternary structure, interacts with the SSU processome.

Its subcellular location is the nucleus. The catalysed reaction is ATP + H2O = ADP + phosphate + H(+). ATP-dependent rRNA helicase required for pre-ribosomal RNA processing. Involved in the maturation of the 35S-pre-rRNA and to its cleavage to mature 18S rRNA. The chain is ATP-dependent rRNA helicase rrp3 from Emericella nidulans (strain FGSC A4 / ATCC 38163 / CBS 112.46 / NRRL 194 / M139) (Aspergillus nidulans).